Here is a 461-residue protein sequence, read N- to C-terminus: MMKSSNKSSGSLIRLDKKHIYIQTLGCQMNVHDSEQIAALMEEKGYICTEDANEADLIILNTCSIREKAAQKAKSQLGRYRNLKRKKRNLLIGVGGCLAQQLGDELLTKVPDIDFIFGTHNIHQLPDFISRIEKSRKKIVETTLHPSTPSIGVLALPCNGQVSSFVTIMQGCNNFCSYCIVPYVRGREESRPPEDIIHEIRMLADHGVKEVTLLGQNVNSYARKTSGEMGFAELLREIEKIKGIERMRFTTSHPKDLSEFLITAFSDLSKLCHHIHLPFQSGSDRILALMNRGYTKSDYLAKVERLRTVCPDISITADVIVGFPGESDEDFKETIDMMNQIRFDNLFSFKYSEREGTAAVKMDGKVSEPLKLERLQILQALQEQHTLEKNKAMEGKQEDVLVEGFSKNCRKDLTGRTSTNKIVNFSGCVDLIGDMVSVLIKEAYLHSLRGEMLCEEVVHAN.

Residues 18–134 (KHIYIQTLGC…LPDFISRIEK (117 aa)) enclose the MTTase N-terminal domain. Residues Cys-27, Cys-63, Cys-97, Cys-172, Cys-176, and Cys-179 each contribute to the [4Fe-4S] cluster site. Positions 158–388 (CNGQVSSFVT…QALQEQHTLE (231 aa)) constitute a Radical SAM core domain. The region spanning 391-454 (KAMEGKQEDV…LHSLRGEMLC (64 aa)) is the TRAM domain.

This sequence belongs to the methylthiotransferase family. MiaB subfamily. In terms of assembly, monomer. [4Fe-4S] cluster is required as a cofactor.

Its subcellular location is the cytoplasm. The enzyme catalyses N(6)-dimethylallyladenosine(37) in tRNA + (sulfur carrier)-SH + AH2 + 2 S-adenosyl-L-methionine = 2-methylsulfanyl-N(6)-dimethylallyladenosine(37) in tRNA + (sulfur carrier)-H + 5'-deoxyadenosine + L-methionine + A + S-adenosyl-L-homocysteine + 2 H(+). Catalyzes the methylthiolation of N6-(dimethylallyl)adenosine (i(6)A), leading to the formation of 2-methylthio-N6-(dimethylallyl)adenosine (ms(2)i(6)A) at position 37 in tRNAs that read codons beginning with uridine. The sequence is that of tRNA-2-methylthio-N(6)-dimethylallyladenosine synthase from Syntrophus aciditrophicus (strain SB).